Reading from the N-terminus, the 207-residue chain is Cilia- and flagella-associated protein 418 (207 aa).

Residues 1 to 75 (MAEDLDELLD…LINEILEEPN (75 aa)) form a required for interaction with FAM161A region. The tract at residues 26 to 52 (MVEQPKGCGGGTHSSDRNQAKAKETLR) is disordered. Residues 39 to 52 (SSDRNQAKAKETLR) show a composition bias toward basic and acidic residues.

Interacts (via N-terminus) with FAM161A (via central region); the interaction is direct. As to expression, widely expressed, with highest levels in heart and brain. Also expressed in the retina (at protein level).

It is found in the cytoplasm. The protein resides in the photoreceptor inner segment. In terms of biological role, may be involved in photoreceptor outer segment disk morphogenesis. This Homo sapiens (Human) protein is Cilia- and flagella-associated protein 418.